The chain runs to 572 residues: Sulfate adenylyltransferase (572 aa).

Residues 1-169 form an N-terminal region; the sequence is MANAPHGGVL…IEAVNKLNHY (169 aa). The segment at 170 to 393 is catalytic; sequence DYVALRYTPA…LRESNPPRAT (224 aa). Glutamine 197 lines the sulfate pocket. Residues 197–200 and 291–294 contribute to the ATP site; these read QTRN and GRDH. Residues threonine 198, arginine 199, and asparagine 200 contribute to the active site. Arginine 199 provides a ligand contact to sulfate. Alanine 295 is a binding site for sulfate. Position 333 (valine 333) interacts with ATP. An allosteric regulation domain; adenylyl-sulfate kinase-like region spans residues 394 to 572; the sequence is QGFTIFLTGY…LESQGFLERQ (179 aa). 3'-phosphoadenylyl sulfate contacts are provided by residues 433 to 436, arginine 450, 476 to 477, and arginine 514; these read DTVR and IA.

It in the N-terminal section; belongs to the sulfate adenylyltransferase family. This sequence in the C-terminal section; belongs to the APS kinase family. Homohexamer. Dimer of trimers.

The protein localises to the cytoplasm. The catalysed reaction is sulfate + ATP + H(+) = adenosine 5'-phosphosulfate + diphosphate. Its pathway is sulfur metabolism; hydrogen sulfide biosynthesis; sulfite from sulfate: step 1/3. Its activity is regulated as follows. Allosterically inhibited by 3'-phosphoadenosine 5'-phosphosulfate (PAPS). Catalyzes the first intracellular reaction of sulfate assimilation, forming adenosine-5'-phosphosulfate (APS) from inorganic sulfate and ATP. Plays an important role in sulfate activation as a component of the biosynthesis pathway of sulfur-containing amino acids. The sequence is that of Sulfate adenylyltransferase from Penicillium chrysogenum (Penicillium notatum).